The primary structure comprises 578 residues: Acyl-coenzyme A synthetase ACSM5, mitochondrial (578 aa).

The transit peptide at 1–22 directs the protein to the mitochondrion; the sequence is MRLWLRGLACQALRSSWGVCRI. Lys96 carries the N6-acetyllysine; alternate modification. Lys96 is modified (N6-succinyllysine; alternate). Position 151 is an N6-acetyllysine (Lys151). 229-237 contacts ATP; that stretch reads TSGTTGAPK. Lys302 is subject to N6-acetyllysine; alternate. Lys302 carries the N6-succinyllysine; alternate modification. An N6-acetyllysine modification is found at Lys335. ATP contacts are provided by residues 367 to 372, Asp454, Arg469, and Lys565; that span reads EGYGQS.

This sequence belongs to the ATP-dependent AMP-binding enzyme family. Requires Mg(2+) as cofactor. It depends on Mn(2+) as a cofactor.

Its subcellular location is the mitochondrion matrix. It carries out the reaction a medium-chain fatty acid + ATP + CoA = a medium-chain fatty acyl-CoA + AMP + diphosphate. Catalyzes the activation of fatty acids by CoA to produce an acyl-CoA, the first step in fatty acid metabolism. The chain is Acyl-coenzyme A synthetase ACSM5, mitochondrial (Acsm5) from Mus musculus (Mouse).